A 1588-amino-acid polypeptide reads, in one-letter code: MVDVYNELGLNYDPNFEEQRNLIDVYLRIYFPKIRPEEFISILDFLNESASDAKKGIEKNKIRTVYDTIKNNLILENEPMRDIEITKKKYEKEYVKLFKENYVTQSFIRAYLLDRGKKIDLFRIFDNFILNENYPFIQYQPPDGTPRSRYNEKYLLENERKEIIMKWFENTPWGISFKVRVSDKSDYKYMAINLSDNGRIDYKIQWKEEDMQTVDDIDKTYSFVKDLIRKINRENERFGIKLKIPSDDQFKFAFINTIQKFELPDNFAINHNDLSEFSRYFFPYVALVIEPRKRQSKTKTTERDERSKFGTYLRYKRVSKYDNKTKIEHRIVFFMRNYEYNDQSLSNEISKEFNITEEQALEEINAVRERYPNIKKSRKVLKKLENIPKYKPPGIGVDIQGKTRNNYKMRIAGARDRAQLNRIITFMNILIYLYAETYLYKRPDRQRMKDLLQKLTKIARRRNKVDEIVNHETPIKSVKQMTNIDRKRLTSKTEDDQNQWTRDCQNSGEDKKRRPQQFLNVEELQKLGYVWNPKLGDINFGHYERKIMVDSNGRTDSNKKKSEVVLRAVMLPLDDSGNNYVYYTCGPEENGKHMYIGFLKSKNPYGEAKPCCFIKDQLYSKNNDKRNLFLKSIGLIQNDESEVNKIVGDQLYILQSSNKIQEGRFAFLPKYLDIFLNAMLNNERVIKNHYLVSTTTGYYFKYGTKQDEYRYLNAVGSVLDLSIEDLRNKLSSSLTKDKNQLLFTSLNNGDIRAQFGSMESYLTYINTNKYLEYPLLNDLICSPGVINKYGLNIIIFQRKIRIIRKSFEREKIREHYYIVCQNHENIEDLIDPDRETILIVKEGKNYYPIILVKKEDENTKEVSITKTFQYNSNPENIVSHIFKYYEVNCQQEFKLLIKEKSNSNLNAKETNKILISLGIKEYVPKYQMIDARFKCRYLITNAGYIIPVIPSGIVKNVNIISTVNNYLKDYTTTQKYLTDLSKLTKNKLKIKPIGVFYKDKRQKSYVISAIMTEGYDAVPIIERSMTSEYIKKEKLLTQGRPNDEDIDRDISRGKSSIVVDKRVYEVSKNKYETETYQLFRYHLSYFLNNTTEGGKFKKEIENIINSEDINKRERKLELKNVLYRMTNADLSKTFNQLISRLNKQFGGQDNVSDQSENQSENQSLESETSPIVRELNPLTQANSPISIIQEPDTIQIIPEDFVPGRRNNLRESFVNTDVDEFDYSEQINPLDEPFDYATNKEPMAESVPFPKNEKTWLSIMPDSKIIDYPSYILKNNREYCYINKNKDACNINKHCAWNNSKNLCLFNVKRIQLIDFINQVTEELIQNELRASEILRRGEYFVSNIVDYNVFTERPGERIVMASNSNLEKILSELFGKENIPRIGKKRYKFDNTQTYEQLNFDNPLKETSIWYIQNIIDNNNTVFRAFANTYYWLVHPYDEVSMRNIGYYSPLQTTLSNIYKSQVINWLLQQENQDMIQKISSYIRYNKVEDFVTKLSMDVNTISSGIVELCILSILYETIIYVNDEYFNVIYVLHPTQGIVYDYKKSKNKFTNEKYQSYKKVIDIRFRYSSNSNYPDYIDALYPKKNN.

The segment covering 486–495 (RKRLTSKTED) has biased composition (basic and acidic residues). Disordered stretches follow at residues 486–515 (RKRL…KRRP) and 1146–1176 (GGQD…RELN). The segment covering 498–507 (NQWTRDCQNS) has biased composition (polar residues). The span at 1150 to 1169 (NVSDQSENQSENQSLESETS) shows a compositional bias: low complexity.

Its subcellular location is the virion. This is an uncharacterized protein from Acanthamoeba polyphaga (Amoeba).